The primary structure comprises 552 residues: Lysine--tRNA ligase (552 aa).

The 'HIGH' region motif lies at 72–80 (PSGLPHLGT). The 'KMSKS' region signature appears at 320 to 324 (KISKS). Residue lysine 323 coordinates ATP.

This sequence belongs to the class-I aminoacyl-tRNA synthetase family.

The protein resides in the cytoplasm. The catalysed reaction is tRNA(Lys) + L-lysine + ATP = L-lysyl-tRNA(Lys) + AMP + diphosphate. The polypeptide is Lysine--tRNA ligase (Caulobacter vibrioides (strain ATCC 19089 / CIP 103742 / CB 15) (Caulobacter crescentus)).